Here is a 786-residue protein sequence, read N- to C-terminus: Myosin light chain kinase 3 (786 aa).

Ser155 is modified (phosphoserine). 3 disordered regions span residues 233-258 (EALD…SEDT), 279-315 (RMSQ…IHSD), and 333-443 (ELFE…GRRV). Over residues 279 to 293 (RMSQSAGEGTSSSKP) the composition is skewed to polar residues. A phosphoserine mark is found at Ser341 and Ser422. Residues 482-737 (VSQHEVLGGG…ATQCLKHEWL (256 aa)) form the Protein kinase domain. ATP contacts are provided by residues 488-496 (LGGGRFGQV) and Lys511. Asp603 (proton acceptor) is an active-site residue.

This sequence belongs to the protein kinase superfamily. CAMK Ser/Thr protein kinase family. Mg(2+) serves as cofactor. In terms of processing, phosphorylated on serine residues. In terms of tissue distribution, expressed in cardiomyocytes (at protein level). Up-regulated in heart after experimental myocardial infarction at the mRNA level.

It is found in the cytoplasm. The catalysed reaction is L-seryl-[myosin light chain] + ATP = O-phospho-L-seryl-[myosin light chain] + ADP + H(+). It carries out the reaction L-threonyl-[myosin light chain] + ATP = O-phospho-L-threonyl-[myosin light chain] + ADP + H(+). Its function is as follows. Calmodulin-dependent kinase that phosphorylates MYL2 in vitro. Promotes sarcomere formation in cardiomyocytes. Increases cardiomyocyte contractility. The polypeptide is Myosin light chain kinase 3 (Mylk3) (Rattus norvegicus (Rat)).